Here is a 161-residue protein sequence, read N- to C-terminus: uncharacterized protein (161 aa).

To M.thermoautotrophicum MTH862.

This is an uncharacterized protein from Methanocaldococcus jannaschii (strain ATCC 43067 / DSM 2661 / JAL-1 / JCM 10045 / NBRC 100440) (Methanococcus jannaschii).